A 331-amino-acid chain; its full sequence is Hydroxysteroid dehydrogenase-like protein 1 (331 aa).

Residues 2–82 form a required for mitochondria translocation region; the sequence is AAVDRFNLLY…TGSTDGIGKA (81 aa). NADP(+)-binding positions include 74 to 80 and D125; that span reads GSTDGIG. A substrate-binding site is contributed by S205. Catalysis depends on Y218, which acts as the Proton acceptor. K222 contacts NADP(+).

The protein belongs to the short-chain dehydrogenases/reductases (SDR) family. 17-beta-HSD 3 subfamily.

The protein localises to the mitochondrion. In terms of biological role, may catalyze the metabolism of steroid hormones and thus play an important role in sex differentiation, the emergence and maintenance of the secondary sexual characters, and the regulation of endocrine. The chain is Hydroxysteroid dehydrogenase-like protein 1 (HSDL1) from Gallus gallus (Chicken).